Reading from the N-terminus, the 157-residue chain is Deoxyuridine 5'-triphosphate nucleotidohydrolase (157 aa).

DUMP-binding residues include Ser63, Gly76, Asp79, Tyr82, Lys87, Arg132, Phe137, and Gly138. A disordered region spans residues 125–157; the sequence is NDLESTERGAGGFGSTGINDEKKRKLDEAEAKE. The segment covering 143-157 has biased composition (basic and acidic residues); the sequence is NDEKKRKLDEAEAKE.

The protein belongs to the dUTPase family. As to quaternary structure, homotrimer. Requires Mg(2+) as cofactor.

The enzyme catalyses dUTP + H2O = dUMP + diphosphate + H(+). The protein operates within pyrimidine metabolism; dUMP biosynthesis; dUMP from dCTP (dUTP route): step 2/2. Involved in nucleotide metabolism via production of dUMP, the immediate precursor of thymidine nucleotides, and decreases the intracellular concentration of dUTP so that uracil cannot be incorporated into DNA. The polypeptide is Deoxyuridine 5'-triphosphate nucleotidohydrolase (DUT1) (Yarrowia lipolytica (strain CLIB 122 / E 150) (Yeast)).